We begin with the raw amino-acid sequence, 297 residues long: Glucuronoxylan 4-O-methyltransferase 3 (297 aa).

The helical transmembrane segment at 9–29 (LNLKVIFIGSSILILIIIYLA) threads the bilayer. Positions 35–47 (SSSSKPISKTNLS) are enriched in low complexity. The segment at 35-63 (SSSSKPISKTNLSQEEEETQHKQEGCPTT) is disordered.

It belongs to the methyltransferase superfamily. In terms of tissue distribution, expressed in hypocotyls, roots, rosette leaves, stems and siliques.

It localises to the golgi apparatus membrane. It catalyses the reaction glucuronoxylan D-glucuronate + n S-adenosyl-L-methionine = glucuronoxylan 4-O-methyl-D-glucuronate + n S-adenosyl-L-homocysteine + n H(+). Methyltransferase catalyzing 4-O-methylation of glucuronic acid side chains on xylan. The sequence is that of Glucuronoxylan 4-O-methyltransferase 3 (GXM3) from Arabidopsis thaliana (Mouse-ear cress).